Consider the following 645-residue polypeptide: Sister chromatid cohesion protein 1 (645 aa).

3 disordered regions span residues 292-311 (FEPENVEPSRPQSPESFALE), 495-527 (QSGFAGENKENEDAEDWSDPFGSSNSSRRGQLE), and 619-645 (CPLSSPKPMGLGNTMENSTMRTPMRPV).

It belongs to the rad21 family. In terms of assembly, component of the cohesin complex, composed of the smc-1 and smc-3 heterodimer attached via their hinge domain, scc-1 which links them, and scc-3. Interacts with smc-1, smc-3, scc-3 and tim-1.

It localises to the nucleus. The protein localises to the chromosome. Its subcellular location is the cytoplasm. Its function is as follows. Cleavable component of the cohesin complex involved in chromosome cohesion during cell cycle. The cohesin complex is required for the cohesion of sister chromatids after DNA replication. The cohesin complex apparently forms a large proteinaceous ring within which sister chromatids can be trapped. At metaphase-anaphase transition, this protein is cleaved and dissociates from chromatin, allowing sister chromatids to segregate. The chain is Sister chromatid cohesion protein 1 from Caenorhabditis elegans.